We begin with the raw amino-acid sequence, 427 residues long: Flotillin-1 (427 aa).

3 positions are modified to phosphoserine: serine 19, serine 163, and serine 385. Residue threonine 387 is modified to Phosphothreonine.

This sequence belongs to the band 7/mec-2 family. Flotillin subfamily. In terms of assembly, heterooligomeric complex of flotillin-1 and flotillin-2 and caveolin-1 and caveolin-2. Interacts with ECPAS.

It localises to the cell membrane. Its subcellular location is the endosome. The protein localises to the membrane. The protein resides in the caveola. It is found in the melanosome. It localises to the membrane raft. Its function is as follows. May act as a scaffolding protein within caveolar membranes, functionally participating in formation of caveolae or caveolae-like vesicles. This Macaca mulatta (Rhesus macaque) protein is Flotillin-1 (FLOT1).